The primary structure comprises 669 residues: L-type lectin-domain containing receptor kinase V.9 (669 aa).

A signal peptide spans 1–21 (MKFFVLVLLLVLQFFSNKALS). Residues 22-286 (QSEEGEFGFN…RDSRSTSVKK (265 aa)) are Extracellular-facing. Residues 38–259 (SGIAITNSKG…SHYILGWTFK (222 aa)) form a legume-lectin like region. Asn53, Asn75, Asn124, Asn206, and Asn261 each carry an N-linked (GlcNAc...) asparagine glycan. Residues 287-307 (ILAISLSLTSLAILVFLTISY) form a helical membrane-spanning segment. Over 308-669 (MLFLKRKKLM…FTEPFVSHGR (362 aa)) the chain is Cytoplasmic. The 260-residue stretch at 344-603 (FRNSELLGKG…LGLFCSHPVA (260 aa)) folds into the Protein kinase domain. ATP-binding positions include 350–358 (LGKGGFGKV) and Lys373. The active-site Proton acceptor is Asp469.

In the C-terminal section; belongs to the protein kinase superfamily. Ser/Thr protein kinase family. This sequence in the N-terminal section; belongs to the leguminous lectin family.

It is found in the cell membrane. It carries out the reaction L-seryl-[protein] + ATP = O-phospho-L-seryl-[protein] + ADP + H(+). The catalysed reaction is L-threonyl-[protein] + ATP = O-phospho-L-threonyl-[protein] + ADP + H(+). The protein is L-type lectin-domain containing receptor kinase V.9 (LECRK59) of Arabidopsis thaliana (Mouse-ear cress).